The following is a 172-amino-acid chain: Stellate protein CG33243 (172 aa).

It belongs to the casein kinase 2 subunit beta family. In terms of assembly, interacts in vitro with the casein kinase 2 alpha subunit (CkII-alpha). The relevance of such interaction is however unclear in vivo. As to expression, probably not expressed in wild-type flies. In males lacking the Y chromosome, it is testis-specific and constitutes the main component of star-shaped crystals.

Its function is as follows. Unknown. In males lacking the Y chromosome, its strong overexpression leads to the appearance of proteinaceous star-shaped crystals in the primary spermatocytes causing meiotic drive, possibly by interfering with normal casein kinase 2 activity. This Drosophila melanogaster (Fruit fly) protein is Stellate protein CG33243 (Ste:CG33243).